Here is a 448-residue protein sequence, read N- to C-terminus: Cysteine--tRNA ligase (448 aa).

C29 serves as a coordination point for Zn(2+). The 'HIGH' region motif lies at 31–41 (PTVYNYIHIGN). 3 residues coordinate Zn(2+): C212, H237, and E241. Positions 269–273 (KMSKS) match the 'KMSKS' region motif. An ATP-binding site is contributed by K272.

This sequence belongs to the class-I aminoacyl-tRNA synthetase family. As to quaternary structure, monomer. The cofactor is Zn(2+).

The protein localises to the cytoplasm. The enzyme catalyses tRNA(Cys) + L-cysteine + ATP = L-cysteinyl-tRNA(Cys) + AMP + diphosphate. The sequence is that of Cysteine--tRNA ligase from Streptococcus equi subsp. zooepidemicus (strain MGCS10565).